Consider the following 264-residue polypeptide: Transmembrane protein 41A (264 aa).

The N-terminal stretch at 1–17 (MRALLGLLLVFGGCTFA) is a signal peptide. 5 consecutive transmembrane segments (helical) span residues 67–87 (AYVF…AIPG), 100–122 (GPWL…CYLL), 153–173 (LFFF…FLNL), 175–195 (APIL…GLIP), and 219–239 (WETV…GTLI). A VTT domain region spans residues 96–207 (GALFGPWLGL…FICVQTGSIL (112 aa)).

It belongs to the TMEM41 family.

It localises to the membrane. This is Transmembrane protein 41A (Tmem41a) from Mus musculus (Mouse).